The primary structure comprises 377 residues: Chaperone protein DnaJ (377 aa).

Residues 5-70 enclose the J domain; sequence DYYQVLGVAK…QKRAAYDQYG (66 aa). The segment at 137-215 adopts a CR-type zinc-finger fold; sequence GYDTQIRVPS…CHGAGKTKET (79 aa). Zn(2+)-binding residues include C150, C153, C167, C170, C189, C192, C203, and C206. CXXCXGXG motif repeat units lie at residues 150–157, 167–174, 189–196, and 203–210; these read CEICHGSG, CPTCNGSG, CPKCHGTG, and CTHCHGAG.

The protein belongs to the DnaJ family. In terms of assembly, homodimer. The cofactor is Zn(2+).

Its subcellular location is the cytoplasm. In terms of biological role, participates actively in the response to hyperosmotic and heat shock by preventing the aggregation of stress-denatured proteins and by disaggregating proteins, also in an autonomous, DnaK-independent fashion. Unfolded proteins bind initially to DnaJ; upon interaction with the DnaJ-bound protein, DnaK hydrolyzes its bound ATP, resulting in the formation of a stable complex. GrpE releases ADP from DnaK; ATP binding to DnaK triggers the release of the substrate protein, thus completing the reaction cycle. Several rounds of ATP-dependent interactions between DnaJ, DnaK and GrpE are required for fully efficient folding. Also involved, together with DnaK and GrpE, in the DNA replication of plasmids through activation of initiation proteins. This Paraburkholderia phymatum (strain DSM 17167 / CIP 108236 / LMG 21445 / STM815) (Burkholderia phymatum) protein is Chaperone protein DnaJ.